We begin with the raw amino-acid sequence, 737 residues long: Polyribonucleotide nucleotidyltransferase (737 aa).

The Mg(2+) site is built by Asp-514 and Asp-520. The 60-residue stretch at 580–639 (PRIITVKIPVDKIGEVIGPKGKMINQIQEDTGADITIEDDGTIYIGAQAGSQAEAARATI) folds into the KH domain. The S1 motif domain maps to 651 to 723 (GERYLGTVVK…SRGKLSLIPV (73 aa)).

Belongs to the polyribonucleotide nucleotidyltransferase family. Mg(2+) serves as cofactor.

Its subcellular location is the cytoplasm. It catalyses the reaction RNA(n+1) + phosphate = RNA(n) + a ribonucleoside 5'-diphosphate. In terms of biological role, involved in mRNA degradation. Catalyzes the phosphorolysis of single-stranded polyribonucleotides processively in the 3'- to 5'-direction. The sequence is that of Polyribonucleotide nucleotidyltransferase from Streptomyces griseus subsp. griseus (strain JCM 4626 / CBS 651.72 / NBRC 13350 / KCC S-0626 / ISP 5235).